The chain runs to 174 residues: MELVVGRVAKSHGVRGELVVEVRTDDPDARFAEGTVLRGRLPRSTEVREFTVESAREHSGRLLVSLAGVDDRSAADALRGTLFVVDSAELPPSDDPDEFYDHELEGLSVRDTAGAVLGTVTEVLHSAAGELLSMRAAEDGREILIPFVTAIVPTVSVAEGYVVIDPPEGLLDPE.

Positions Pro-96–Leu-170 constitute a PRC barrel domain.

Belongs to the RimM family. Binds ribosomal protein uS19.

It localises to the cytoplasm. Its function is as follows. An accessory protein needed during the final step in the assembly of 30S ribosomal subunit, possibly for assembly of the head region. Essential for efficient processing of 16S rRNA. May be needed both before and after RbfA during the maturation of 16S rRNA. It has affinity for free ribosomal 30S subunits but not for 70S ribosomes. The protein is Ribosome maturation factor RimM of Nocardia farcinica (strain IFM 10152).